A 303-amino-acid chain; its full sequence is Glutamate formimidoyltransferase (303 aa).

His81 acts as the For formimidoyltransferase activity in catalysis. Gly164–Gly172 serves as a coordination point for folate.

It belongs to the formiminotransferase family.

It is found in the cytoplasm. It catalyses the reaction (6S)-5-formyl-5,6,7,8-tetrahydrofolate + L-glutamate = N-formyl-L-glutamate + (6S)-5,6,7,8-tetrahydrofolate + H(+). It carries out the reaction 5-formimidoyltetrahydrofolate + L-glutamate = N-formimidoyl-L-glutamate + (6S)-5,6,7,8-tetrahydrofolate. The catalysed reaction is (6S)-5-formyl-5,6,7,8-tetrahydrofolate + ATP = (6R)-5,10-methenyltetrahydrofolate + ADP + phosphate. Its pathway is amino-acid degradation; L-histidine degradation into L-glutamate; L-glutamate from N-formimidoyl-L-glutamate (transferase route): step 1/1. The protein operates within one-carbon metabolism; tetrahydrofolate interconversion. Functionally, catalyzes the transfer of the formyl group from N-formylglutamate to tetrahydrofolate (THF) to yield 5-formyltetrahydrofolate (5-CHO-THF) and glutamate (Glu). The triglutamate form of 5-CHO-THF (5-CHO-THF-Glu3) can also be used as substrate. It can also catalyze the transfer of the formimino group from N-formiminoglutamate to tetrahydrofolate (THF) to yield 5-formiminotetrahydrofolate (5-NH=CH-THF) and glutamate (Glu). It can replace YgfA to catalyze the irreversible ATP-dependent transformation of 5-CHO-THF to form 5,10-methenyltetrahydrofolate (5,10-CH=THF). The sequence is that of Glutamate formimidoyltransferase from Thermoplasma acidophilum (strain ATCC 25905 / DSM 1728 / JCM 9062 / NBRC 15155 / AMRC-C165).